The chain runs to 172 residues: Myosin regulatory light chain 2, smooth muscle minor isoform (172 aa).

Ser-2 carries the N-acetylserine modification. Thr-19 bears the Phosphothreonine; by MLCK mark. At Ser-20 the chain carries Phosphoserine; by MLCK. 3 consecutive EF-hand domains span residues 29–64, 98–133, and 134–169; these read SQIQEFKEAFNMIDQNRDGFIDKEDLHDMLASLGKN, DPEDVIRNAFACFDEEATGFIQEDYLRELLTTMGDR, and FTDEEVDELYREAPIDKKGNFNYIEFTRILKHGAKD. Ca(2+) contacts are provided by Asp-42, Asn-44, Asp-46, and Asp-53.

In terms of assembly, myosin is a hexamer of 2 heavy chains and 4 light chains. Phosphorylation increases the actin-activated myosin ATPase activity and thereby regulates the contractile activity.

Its function is as follows. Myosin regulatory subunit that plays an important role in regulation of both smooth muscle and nonmuscle cell contractile activity. Implicated in cytokinesis, receptor capping, and cell locomotion. The protein is Myosin regulatory light chain 2, smooth muscle minor isoform of Gallus gallus (Chicken).